Reading from the N-terminus, the 336-residue chain is TBC1 domain family member 21 (336 aa).

Residues 57 to 265 (GLHPFVRTEA…RLWEVLLTGK (209 aa)) enclose the Rab-GAP TBC domain.

Interacts with ACTB. Interacts with ARMC12. Interacts with TOMM20 and DNAH7. Interacts with RAP1A. Interacts with RAB10. Expressed in testis, specifically in elongating and elongated spermatids (at protein level). Expressed in the sperm midpiece (at protein level).

Its subcellular location is the cytoplasmic vesicle. The protein resides in the secretory vesicle. It localises to the acrosome. The protein localises to the cytoplasm. It is found in the cytoskeleton. Acts as a GTPase-activating protein for Rab family protein (s). Essential for the establishment of male fertility, and is required for both the production of normal sperm number and sperm function. Plays an important role in the formation of intact mitochondria, outer dense fibers and axoneme within the sperm tail. Essential for sperm mitochondrial sheath formation and for the interactions of ARMC12 with VDAC2 and VDAC3. May be involved in acrosome formation and cytoskeletal reorganization during spermiogenesis, possibly by regulating RAB3A activity. In Mus musculus (Mouse), this protein is TBC1 domain family member 21.